Reading from the N-terminus, the 138-residue chain is Ribulose bisphosphate carboxylase small subunit (138 aa).

Belongs to the RuBisCO small chain family. As to quaternary structure, heterohexadecamer of 8 large and 8 small subunits.

It is found in the plastid. It localises to the chloroplast. Its function is as follows. RuBisCO catalyzes two reactions: the carboxylation of D-ribulose 1,5-bisphosphate, the primary event in carbon dioxide fixation, as well as the oxidative fragmentation of the pentose substrate in the photorespiration process. Both reactions occur simultaneously and in competition at the same active site. Although the small subunit is not catalytic it is essential for maximal activity. In Pyropia haitanensis (Red seaweed), this protein is Ribulose bisphosphate carboxylase small subunit.